The chain runs to 406 residues: O-glycosyltransferase PaGT (406 aa).

Positions 1–26 are disordered; the sequence is MSPPSQIKPPQGTTPVPPSELDPRSD.

The protein belongs to the afumC glycosyltransferase family.

It participates in mycotoxin biosynthesis. O-glycosyltransferase; part of the 2 gene clusters that mediate the biosynthesis of fusicoccins, diterpene glucosides that display phytohormone-like activity and function as potent activators of plasma membrane H(+)-ATPases in plants by modifying 14-3-3 proteins and cause the plant disease constriction canker. The first step in the pathway is performed by the fusicoccadiene synthase PaFS that possesses both prenyl transferase and terpene cyclase activity, converting isopentenyl diphosphate and dimethylallyl diphosphate into geranylgeranyl diphosphate (GGDP) and successively converting GGDP into fusicocca-2,10(14)-diene, a precursor for fusicoccin H. The second step is the oxidation at the C-8 position by the cytochrome P450 monooxygenase PaP450-2 to yield fusicocca-2,10(14)-diene-8-beta-ol. The cytochrome P450 monooxygenase PaP450-1 then catalyzes the hydroxylation at the C-16 position to produce fusicocca-2,10(14)-diene-8-beta,16-diol. The dioxygenase fc-dox then catalyzes the 16-oxydation of fusicocca-2,10(14)-diene-8-beta,16-diol to yield an aldehyde (8-beta-hydroxyfusicocca-1,10(14)-dien-16-al). The short-chain dehydrogenase/reductase fc-sdr catalyzes the reduction of the aldehyde to yield fusicocca-1,10(14)-diene-8-beta,16-diol. The next step is the hydroxylation at C-9 performed by the cytochrome P450 monooxygenase PaP450-3 that leads to fusicoccin H aglycon which is glycosylated to fusicoccin H by the O-glycosyltransferase PaGT. Hydroxylation at C-12 by the cytochrome P450 monooxygenase PaP450-4 leads then to the production of fusicoccin Q and is followed by methylation by the O-methyltransferase PaMT to yield fusicoccin P. Fusicoccin P is further converted to fusicoccin J via prenylation by the O-glucose prenyltransferase PaPT. Cytochrome P450 monooxygenase PaP450-5 then performs hydroxylation at C-19 to yield dideacetyl-fusicoccin A which is acetylated to 3'-O-deacetyl-fusicoccin A by the O-acetyltransferase PaAT-2. Finally, a another acetylation by the O-acetyltransferase PaAT-1 yields fusicoccin A. This chain is O-glycosyltransferase PaGT, found in Phomopsis amygdali (Fusicoccum amygdali).